The chain runs to 505 residues: Bifunctional pantoate ligase/cytidylate kinase (505 aa).

Positions 1–268 are pantoate--beta-alanine ligase; that stretch reads MHQWRKHQQS…CGETRLIDHT (268 aa). An ATP-binding site is contributed by 18-25; it reads MGALHRGH. The Proton donor role is filled by His25. Residue Gln53 coordinates (R)-pantoate. Gln53 provides a ligand contact to beta-alanine. 142–145 contributes to the ATP binding site; it reads GEKD. Gln148 is a binding site for (R)-pantoate. ATP-binding positions include Val171 and 179-182; that span reads CSSR. Residues 269-505 are cytidylate kinase; that stretch reads FLMSRQPIVA…PEEVWPTAGR (237 aa).

This sequence in the N-terminal section; belongs to the pantothenate synthetase family. It in the C-terminal section; belongs to the cytidylate kinase family. Type 1 subfamily.

It is found in the cytoplasm. The enzyme catalyses (R)-pantoate + beta-alanine + ATP = (R)-pantothenate + AMP + diphosphate + H(+). It catalyses the reaction CMP + ATP = CDP + ADP. It carries out the reaction dCMP + ATP = dCDP + ADP. Its pathway is cofactor biosynthesis; (R)-pantothenate biosynthesis; (R)-pantothenate from (R)-pantoate and beta-alanine: step 1/1. In terms of biological role, catalyzes the condensation of pantoate with beta-alanine in an ATP-dependent reaction via a pantoyl-adenylate intermediate. Catalyzes the transfer of a phosphate group from ATP to either CMP or dCMP to form CDP or dCDP and ADP, respectively. This is Bifunctional pantoate ligase/cytidylate kinase from Prochlorococcus marinus (strain MIT 9313).